Reading from the N-terminus, the 754-residue chain is Polyadenylate-binding protein, cytoplasmic and nuclear (754 aa).

The segment covering 1-25 (MSAEVSTTPAADNVNGTPEATNAAA) has biased composition (polar residues). The interval 1–52 (MSAEVSTTPAADNVNGTPEATNAAATSAPEVTAVESSSPTSPNNNNQPHSAS) is disordered. Residues 36–46 (SSSPTSPNNNN) are compositionally biased toward low complexity. RRM domains are found at residues 51–129 (ASLY…WSQR), 139–216 (GNVF…HHIS), 232–309 (TNIY…RAQK), and 335–465 (VNLY…LAQR). Disordered stretches follow at residues 365 to 420 (KVMR…KKSD) and 595 to 648 (RGGG…EEAP). Residues 366 to 420 (VMRDSTPAERTETPDSEKEKEVNKENEKKEDEEKAAEEKPKESDEEKKDETKKSD) are compositionally biased toward basic and acidic residues. A compositionally biased stretch (gly residues) spans 610–633 (GMRGPGYQGRGGPQGGPRPQGGRG). Positions 634 to 648 (QNAAAQPAAGREEAP) are enriched in low complexity. Residues 649–726 (AGALTAQALN…ALSVYDEYMK (78 aa)) enclose the PABC domain. The tract at residues 729–754 (GEGEAPADADKPKEAAKETATEENKS) is disordered.

It belongs to the polyadenylate-binding protein type-1 family.

It localises to the cytoplasm. The protein localises to the nucleus. Its function is as follows. Binds the poly(A) tail of mRNA. Appears to be an important mediator of the multiple roles of the poly(A) tail in mRNA biogenesis, stability and translation. In the nucleus, involved in both mRNA cleavage and polyadenylation. Is also required for efficient mRNA export to the cytoplasm. Acts in concert with a poly(A)-specific nuclease (PAN) to affect poly(A) tail shortening, which may occur concomitantly with either nucleocytoplasmic mRNA transport or translational initiation. In the cytoplasm, stimulates translation initiation and regulates mRNA decay through translation termination-coupled poly(A) shortening, probably mediated by PAN. The protein is Polyadenylate-binding protein, cytoplasmic and nuclear (pab1) of Aspergillus clavatus (strain ATCC 1007 / CBS 513.65 / DSM 816 / NCTC 3887 / NRRL 1 / QM 1276 / 107).